Reading from the N-terminus, the 441-residue chain is Alpha-methylserine aldolase (441 aa).

Lys256 is modified (N6-(pyridoxal phosphate)lysine).

Belongs to the SHMT family. Alpha-methylserine aldolase subfamily. Homodimer. Pyridoxal 5'-phosphate is required as a cofactor.

The enzyme catalyses 2-methyl-L-serine = formaldehyde + L-alanine. Its function is as follows. Catalyzes the reversible interconversion of alpha-methyl-L-serine to L-alanine and formaldehyde. In Variovorax paradoxus, this protein is Alpha-methylserine aldolase.